The sequence spans 873 residues: Chitin synthase F (873 aa).

The disordered stretch occupies residues 1-105 (MEDAHDQSSR…KSGSGLRRYP (105 aa)). Composition is skewed to polar residues over residues 33–46 (SYPS…SQSL), 58–72 (ISSQ…QNPS), and 80–98 (ESEV…TKSG). N506 carries an N-linked (GlcNAc...) asparagine glycan. The next 7 helical transmembrane spans lie at 532–554 (LVFL…FSLA), 588–608 (IVNN…FFLA), 621–641 (ILTF…SFYL), 672–692 (GLVL…SILY), 702–722 (SWAY…YAFC), 802–822 (LVLL…NDSV), and 841–861 (VILW…LWFL).

This sequence belongs to the chitin synthase family. Class III subfamily.

The protein localises to the cell membrane. The catalysed reaction is [(1-&gt;4)-N-acetyl-beta-D-glucosaminyl](n) + UDP-N-acetyl-alpha-D-glucosamine = [(1-&gt;4)-N-acetyl-beta-D-glucosaminyl](n+1) + UDP + H(+). Functionally, polymerizes chitin, a structural polymer of the cell wall and septum, by transferring the sugar moiety of UDP-GlcNAc to the non-reducing end of the growing chitin polymer. Plays an important role in septal growth or maintenance. Mediates colony spore formation. This is Chitin synthase F from Aspergillus niger (strain ATCC MYA-4892 / CBS 513.88 / FGSC A1513).